A 1011-amino-acid polypeptide reads, in one-letter code: Probable beta-galactosidase E (1011 aa).

The signal sequence occupies residues 1–19; sequence MKSLLKRLIALAAAYSVAA. Substrate is bound by residues Y92, N136, A137, E138, and N195. Residue E196 is the Proton donor of the active site. An N-linked (GlcNAc...) asparagine glycan is attached at N202. Residue Y261 participates in substrate binding. The cysteines at positions 267 and 316 are disulfide-linked. The active-site Nucleophile is E299. Y365 lines the substrate pocket. N-linked (GlcNAc...) asparagine glycans are attached at residues N406, N423, N446, N455, N588, N622, N704, N745, N759, N772, N778, and N913.

It belongs to the glycosyl hydrolase 35 family.

Its subcellular location is the secreted. The catalysed reaction is Hydrolysis of terminal non-reducing beta-D-galactose residues in beta-D-galactosides.. In terms of biological role, cleaves beta-linked terminal galactosyl residues from gangliosides, glycoproteins, and glycosaminoglycans. This chain is Probable beta-galactosidase E (lacE), found in Aspergillus fumigatus (strain CBS 144.89 / FGSC A1163 / CEA10) (Neosartorya fumigata).